A 386-amino-acid polypeptide reads, in one-letter code: Succinate--CoA ligase [ADP-forming] subunit beta (386 aa).

In terms of domain architecture, ATP-grasp spans 9–244 (KDLLTAYQLP…PSQENIRDVL (236 aa)). ATP-binding positions include Lys46, 53–55 (GRG), Val102, and Glu107. Mg(2+) contacts are provided by Asn199 and Asp213. Residues Asn264 and 321-323 (GIM) contribute to the substrate site.

The protein belongs to the succinate/malate CoA ligase beta subunit family. Heterotetramer of two alpha and two beta subunits. It depends on Mg(2+) as a cofactor.

It carries out the reaction succinate + ATP + CoA = succinyl-CoA + ADP + phosphate. The catalysed reaction is GTP + succinate + CoA = succinyl-CoA + GDP + phosphate. The protein operates within carbohydrate metabolism; tricarboxylic acid cycle; succinate from succinyl-CoA (ligase route): step 1/1. In terms of biological role, succinyl-CoA synthetase functions in the citric acid cycle (TCA), coupling the hydrolysis of succinyl-CoA to the synthesis of either ATP or GTP and thus represents the only step of substrate-level phosphorylation in the TCA. The beta subunit provides nucleotide specificity of the enzyme and binds the substrate succinate, while the binding sites for coenzyme A and phosphate are found in the alpha subunit. This Chlamydia trachomatis serovar L2 (strain ATCC VR-902B / DSM 19102 / 434/Bu) protein is Succinate--CoA ligase [ADP-forming] subunit beta.